Here is a 185-residue protein sequence, read N- to C-terminus: RRM domain-containing protein ECU09_1470 (185 aa).

RRM domains are found at residues 8–87 and 101–170; these read NQLA…YAKR and KKVY…PAYE.

This is RRM domain-containing protein ECU09_1470 from Encephalitozoon cuniculi (strain GB-M1) (Microsporidian parasite).